We begin with the raw amino-acid sequence, 711 residues long: Long-chain-fatty-acid--CoA ligase 4 (711 aa).

Residues 8–28 (LTIILLPVHLLITIYSALIFI) traverse the membrane as a helical; Signal-anchor for type III membrane protein segment. At 29–711 (PWYFLTNAKK…KDIERMYGGK (683 aa)) the chain is on the cytoplasmic side. Residue Ser-447 is modified to Phosphoserine.

It belongs to the ATP-dependent AMP-binding enzyme family. The cofactor is Mg(2+). Abundant in steroidogenic tissues, also found in the kidney, brain and liver.

Its subcellular location is the mitochondrion outer membrane. The protein resides in the peroxisome membrane. The protein localises to the microsome membrane. It is found in the endoplasmic reticulum membrane. It localises to the cell membrane. The catalysed reaction is a long-chain fatty acid + ATP + CoA = a long-chain fatty acyl-CoA + AMP + diphosphate. It carries out the reaction (5Z,8Z,11Z,14Z)-eicosatetraenoate + ATP + CoA = (5Z,8Z,11Z,14Z)-eicosatetraenoyl-CoA + AMP + diphosphate. It catalyses the reaction 15-hydroxy-(5Z,8Z,11Z,13E)-eicosatetraenoate + ATP + CoA = 15-hydroxy-(5Z,8Z,11Z,13E)-eicosatetraenoyl-CoA + AMP + diphosphate. The enzyme catalyses 12-hydroxy-(5Z,8Z,10E,14Z)-eicosatetraenoate + ATP + CoA = 12-hydroxy-(5Z,8Z,10E,14Z)-eicosatetraenoyl-CoA + AMP + diphosphate. The catalysed reaction is 5-hydroxy-(6E,8Z,11Z,14Z)-eicosatetraenoate + ATP + CoA = 5-hydroxy-(6E,8Z,11Z,14Z)-eicosatetraenoyl-CoA + AMP + diphosphate. It carries out the reaction 5,6-epoxy-(8Z,11Z,14Z)-eicosatrienoate + ATP + CoA = 5,6-epoxy-(8Z,11Z,14Z)-eicosatrienoyl-CoA + AMP + diphosphate. It catalyses the reaction 14,15-epoxy-(5Z,8Z,11Z)-eicosatrienoate + ATP + CoA = 14,15-epoxy-(5Z,8Z,11Z)-eicosatrienoyl-CoA + AMP + diphosphate. The enzyme catalyses 11,12-epoxy-(5Z,8Z,14Z)-eicosatrienoate + ATP + CoA = 11,12-epoxy-(5Z,8Z,14Z)-eicosatrienoyl-CoA + AMP + diphosphate. The catalysed reaction is 8,9-epoxy-(5Z,11Z,14Z)-eicosatrienoate + ATP + CoA = 8,9-epoxy-(5Z,11Z,14Z)-eicosatrienoyl-CoA + AMP + diphosphate. It carries out the reaction hexadecanoate + ATP + CoA = hexadecanoyl-CoA + AMP + diphosphate. It catalyses the reaction (E)-hexadec-2-enoate + ATP + CoA = (2E)-hexadecenoyl-CoA + AMP + diphosphate. Both triacsin C and rosiglitazone inhibit arachidonoyl-CoA ligase activity. Functionally, catalyzes the conversion of long-chain fatty acids to their active form acyl-CoA for both synthesis of cellular lipids, and degradation via beta-oxidation. Preferentially activates arachidonate and eicosapentaenoate as substrates. Preferentially activates 8,9-EET &gt; 14,15-EET &gt; 5,6-EET &gt; 11,12-EET. Modulates glucose-stimulated insulin secretion by regulating the levels of unesterified EETs. Modulates prostaglandin E2 secretion. In Mus musculus (Mouse), this protein is Long-chain-fatty-acid--CoA ligase 4 (Acsl4).